The chain runs to 143 residues: uncharacterized protein (143 aa).

One can recognise an HTH cro/C1-type domain in the interval 24 to 78 (IRQRREWQNMSQTTLGEAIGVTFQQVQKYEKGVNRVGAGRLQQISKALKVEPSYF). The H-T-H motif DNA-binding region spans 35–54 (QTTLGEAIGVTFQQVQKYEK).

This is an uncharacterized protein from Sinorhizobium fredii (strain NBRC 101917 / NGR234).